We begin with the raw amino-acid sequence, 479 residues long: Probable aspartic-type endopeptidase OPSB (479 aa).

The first 19 residues, 1–19, serve as a signal peptide directing secretion; the sequence is MRGDSFIWSLTTAASLLYA. The region spanning 58–393 is the Peptidase A1 domain; that stretch reads SGKTVSQDLD…DLDNNEISIA (336 aa). The N-linked (GlcNAc...) asparagine glycan is linked to asparagine 68. The active site involves aspartate 76. N-linked (GlcNAc...) asparagine glycosylation occurs at asparagine 121. Aspartate 275 is an active-site residue. Asparagine 398 carries N-linked (GlcNAc...) asparagine glycosylation. The disordered stretch occupies residues 435–454; sequence LSGIETGVPGARPTSRGAAP. Residue glycine 451 is the site of GPI-anchor amidated glycine attachment. Residues 452–479 constitute a propeptide, removed in mature form; that stretch reads AAPTMRPDVTFGVAAAGLAGAGILFAFM.

The protein belongs to the peptidase A1 family.

It localises to the cell membrane. Its function is as follows. Probable GPI-anchored aspartic-type endopeptidase which contributes to virulence. This chain is Probable aspartic-type endopeptidase OPSB (OPSB), found in Arthroderma otae (strain ATCC MYA-4605 / CBS 113480) (Microsporum canis).